The chain runs to 747 residues: Polyribonucleotide nucleotidyltransferase (747 aa).

Mg(2+)-binding residues include aspartate 493 and aspartate 499. In terms of domain architecture, KH spans 560-619 (PRIITLQINPEKIGALIGPGGKTVRGITEATGAQIDIEEDGRVYISTPDAAAAQQAVAMV). Residues 629–698 (GDIFLGKVVR…GTGKVSLSRR (70 aa)) form the S1 motif domain. Residues 705 to 747 (TAEDRRAAGAGRGLRDGGGRSGGSDRGGDRGPRGDDRQRPRRR) are disordered. 2 stretches are compositionally biased toward basic and acidic residues: residues 706 to 722 (AEDRRAAGAGRGLRDGG) and 730 to 747 (RGGDRGPRGDDRQRPRRR).

It belongs to the polyribonucleotide nucleotidyltransferase family. It depends on Mg(2+) as a cofactor.

Its subcellular location is the cytoplasm. The enzyme catalyses RNA(n+1) + phosphate = RNA(n) + a ribonucleoside 5'-diphosphate. Involved in mRNA degradation. Catalyzes the phosphorolysis of single-stranded polyribonucleotides processively in the 3'- to 5'-direction. The polypeptide is Polyribonucleotide nucleotidyltransferase (Roseiflexus sp. (strain RS-1)).